The sequence spans 384 residues: uncharacterized protein (384 aa).

Disordered regions lie at residues 133–257 (RQNS…TNQD) and 297–368 (ERTP…STAT). The segment covering 143-157 (PSTSSEPEPQPSTSS) has biased composition (low complexity). The span at 302–315 (DQTDITDDSADWSE) shows a compositional bias: acidic residues. Over residues 316 to 342 (GETRRPSHSEVGERRLSRENNSEDPNR) the composition is skewed to basic and acidic residues. The span at 343–363 (SRSRSRSRERRRRRPRVRPGR) shows a compositional bias: basic residues.

This is an uncharacterized protein from Gallid herpesvirus 2 (strain Chicken/Md5/ATCC VR-987) (GaHV-2).